A 36-amino-acid polypeptide reads, in one-letter code: Protein YmgL (36 aa).

The sequence is that of Protein YmgL from Escherichia coli (strain K12).